Reading from the N-terminus, the 290-residue chain is MKSGFVSIIGRPSTGKSTLLNSICGHQISITSSTPQTTRNKIKGIFTDKRGQIIFIDTPGFHLSKKNFNIALMNNVYSAIIETELIIYVIDIQDQPGTEENEILTIIQRSKINFIVVINKIDIHKTKEKEIMTFLEEKKIQKNKIIKISAEKQINIETMKDKIYENLNEGPLYYPKEYYTDQKINLRISEIIRGVTIKKLKEELPYSIYTEIEILEDRENKFFIKANIIVAGESQKGIIVGKGGKGIKSIGEESRKIISKILEKKCNLFLQVKLRKNWNKNAKLIKNLIN.

The 168-residue stretch at 2–169 (KSGFVSIIGR…KDKIYENLNE (168 aa)) folds into the Era-type G domain. Residues 10-17 (GRPSTGKS) are G1. A GTP-binding site is contributed by 10 to 17 (GRPSTGKS). Positions 36–40 (QTTRN) are G2. The tract at residues 57 to 60 (DTPG) is G3. GTP is bound by residues 57-61 (DTPGF) and 119-122 (NKID). Residues 119-122 (NKID) are G4. Residues 148 to 150 (ISA) form a G5 region. The KH type-2 domain maps to 200-276 (LKEELPYSIY…NLFLQVKLRK (77 aa)).

This sequence belongs to the TRAFAC class TrmE-Era-EngA-EngB-Septin-like GTPase superfamily. Era GTPase family. In terms of assembly, monomer.

The protein resides in the cytoplasm. It is found in the cell inner membrane. Functionally, an essential GTPase that binds both GDP and GTP, with rapid nucleotide exchange. Plays a role in 16S rRNA processing and 30S ribosomal subunit biogenesis and possibly also in cell cycle regulation and energy metabolism. The polypeptide is GTPase Era (Borrelia duttonii (strain Ly)).